Reading from the N-terminus, the 556-residue chain is Protein F37C4.5 (556 aa).

N-acetylalanine is present on Ala-2.

In Caenorhabditis elegans, this protein is Protein F37C4.5.